A 390-amino-acid chain; its full sequence is Mannitol-1-phosphate 5-dehydrogenase (390 aa).

3–14 is a binding site for NAD(+); that stretch reads ALHFGAGNIGRG.

Belongs to the mannitol dehydrogenase family.

The enzyme catalyses D-mannitol 1-phosphate + NAD(+) = beta-D-fructose 6-phosphate + NADH + H(+). The polypeptide is Mannitol-1-phosphate 5-dehydrogenase (Buchnera aphidicola subsp. Baizongia pistaciae (strain Bp)).